The primary structure comprises 366 residues: Putative amino-acid transporter MJ1196 (366 aa).

The next 11 helical transmembrane spans lie at 14 to 34 (ITSIVGGGIFVLSPLTYLLFG), 37 to 57 (IIWGWALLIFVSLIMASPFAY), 87 to 107 (ILWLSGVFALSGVVSFFEIVF), 111 to 131 (FNVSYVGLCLIVILTALILGG), 141 to 161 (IFGILTITIILYIVFSNGIKI), 173 to 193 (ILTIYFGLWTATGWEGITMPL), 205 to 225 (GLLVGTFIIGVLYLLFSLTIV), 247 to 267 (FLLAGMLLIISSCAFSVLFTL), 291 to 311 (IPYYGVILNTLLVIILLIFDA), 314 to 334 (LVDMSMFSTLIAYFLLYLAVF), and 346 to 366 (LISMLITGLLILFRVYNFIIL).

It belongs to the amino acid-polyamine-organocation (APC) superfamily.

Its subcellular location is the cell membrane. The chain is Putative amino-acid transporter MJ1196 from Methanocaldococcus jannaschii (strain ATCC 43067 / DSM 2661 / JAL-1 / JCM 10045 / NBRC 100440) (Methanococcus jannaschii).